The sequence spans 568 residues: MEHIMNPFMSPAYLLGHGPHSHQHVHSHLPSHPQPNAASPASSPGGSSGSGSGSAAGSGTGSGSSLKPRRWGSPPINLAGQFINPATGKKRVQCSICFKTFCDKGALKIHFSAVHLREMHKCTVEGCNMVFSSRRSRNRHSANPNPKLHSPHIRRKISPHDGRTAQQFPVFSPGTAAAAAAVAGRLPVAFPGLLPPPPPHHGHHPYVMFGGQAGLHGLGLLSTGCQDPDSGSVDNEQDADPEDDNDFVYVDMQANSSSPAASSEDQEEHERDNEQDEEMHCSLSLASSSSIAADEERAADQPLDFSLHKRRKSEQDREQEQEQEQEREREAEKEQEQDVESDKEHEPEQEHELEREKRSPSDAFSMDQLLGKRKRHDSTASSSACSTAAASSASSSSASASANPPQTSIKMDLDPDSDSAYMTSRRQMLPLPVLDLEEHHHLRLLQTQMFAAAAAAAATSQAPPTAFLPAGSPVDLAKDSPPMWSLLSEMYRSMLLKTQHQQYNHHHQLQQQHQQEQHHHLTLSHHHQEQHHHLGHHHMGHHHHHHHQHHQQQPQQQSPAATNAPISV.

The interval 16–77 is disordered; the sequence is GHGPHSHQHV…PRRWGSPPIN (62 aa). A compositionally biased stretch (basic residues) spans 19 to 29; the sequence is PHSHQHVHSHL. A compositionally biased stretch (low complexity) spans 30–45; that stretch reads PSHPQPNAASPASSPG. Residues 46–62 are compositionally biased toward gly residues; sequence GSSGSGSGSAAGSGTGS. 2 C2H2-type zinc fingers span residues 92–115 and 120–145; these read VQCS…SAVH and HKCT…ANPN. Disordered stretches follow at residues 134–157, 220–364, 391–419, and 501–568; these read RRSR…RRKI, LLST…SDAF, SSAS…DSDS, and QQYN…PISV. The span at 235–246 shows a compositional bias: acidic residues; sequence NEQDADPEDDND. The span at 253–263 shows a compositional bias: polar residues; sequence QANSSSPAASS. Low complexity predominate over residues 282–292; sequence SLSLASSSSIA. The span at 313-360 shows a compositional bias: basic and acidic residues; sequence SEQDREQEQEQEQEREREAEKEQEQDVESDKEHEPEQEHELEREKRSP. Residues 391–402 are compositionally biased toward low complexity; it reads SSASSSSASASA. Basic residues predominate over residues 520–550; the sequence is HLTLSHHHQEQHHHLGHHHMGHHHHHHHQHH. The span at 558–568 shows a compositional bias: polar residues; the sequence is SPAATNAPISV.

Expressed at low levels in the adult head and very low, but detectable, levels in the body.

Its subcellular location is the nucleus. Its function is as follows. Required for the establishment of stable connections between the larval optic nerves, the Bolwig's nerves, and their target cells in the brain during embryonic development. The sequence is that of Protein disconnected (disco) from Drosophila melanogaster (Fruit fly).